The primary structure comprises 266 residues: uncharacterized protein (266 aa).

It belongs to the ascovirus HvAV ORF59 family.

This is an uncharacterized protein from Trichoplusia ni ascovirus 2c (TnAV-2c).